An 89-amino-acid chain; its full sequence is Small ribosomal subunit protein uS15 (89 aa).

Belongs to the universal ribosomal protein uS15 family. As to quaternary structure, part of the 30S ribosomal subunit. Forms a bridge to the 50S subunit in the 70S ribosome, contacting the 23S rRNA.

One of the primary rRNA binding proteins, it binds directly to 16S rRNA where it helps nucleate assembly of the platform of the 30S subunit by binding and bridging several RNA helices of the 16S rRNA. In terms of biological role, forms an intersubunit bridge (bridge B4) with the 23S rRNA of the 50S subunit in the ribosome. The polypeptide is Small ribosomal subunit protein uS15 (Pseudomonas putida (strain GB-1)).